The chain runs to 472 residues: Membrane-bound acylglycerophosphatidylinositol O-acyltransferase MBOAT7 (472 aa).

The Cytoplasmic portion of the chain corresponds to 1-5; that stretch reads MSPEE. Residues 6–22 traverse the membrane as a helical segment; the sequence is WTYLVVLLISIPIGFLF. The Lumenal segment spans residues 23–33; the sequence is KKAGPGLKRWG. Residues 34–57 form a helical membrane-spanning segment; the sequence is AAAVGLGLTLFTCGPHTLHSLVTI. At 58–73 the chain is on the cytoplasmic side; it reads LGTWALIQAQPCSCHA. A helical transmembrane segment spans residues 74 to 93; that stretch reads LALAWTFSYLLFFRALSLLG. Topologically, residues 94-194 are lumenal; that stretch reads LPTPTPFTNA…VPSLRPLLRR (101 aa). The helical transmembrane segment at 195–212 threads the bilayer; that stretch reads AWPAPLFGLLFLLSSHLF. Over 213–231 the chain is Cytoplasmic; that stretch reads PLEAVREDAFYARPLPARL. Residues 232–261 form a helical membrane-spanning segment; that stretch reads FYMIPVFFAFRMRFYVAWIAAECGCIAAGF. At 262-426 the chain is on the lumenal side; that stretch reads GAYPVAAKAR…LSLRDTLRYW (165 aa). Asparagine 321 carries an N-linked (GlcNAc...) asparagine glycan. The helical transmembrane segment at 427-447 threads the bilayer; it reads ASVYFCVHVLALAALGLGLAL. Residues 448 to 472 lie on the Cytoplasmic side of the membrane; sequence GRGGPGRRKSGAPAPSPASGKLREE. The segment at 450 to 472 is disordered; the sequence is GGPGRRKSGAPAPSPASGKLREE.

Belongs to the membrane-bound acyltransferase family. As to quaternary structure, interacts with SPTSSA; the interaction facilitates MBOAT7 location to mitochondria-associated membranes (MAMs).

It is found in the endoplasmic reticulum membrane. The enzyme catalyses a 1-acyl-sn-glycero-3-phospho-(1D-myo-inositol) + an acyl-CoA = a 1,2-diacyl-sn-glycero-3-phospho-(1D-myo-inositol) + CoA. It catalyses the reaction a 1-acyl-sn-glycero-3-phospho-(1D-myo-inositol) + (5Z,8Z,11Z,14Z)-eicosatetraenoyl-CoA = a 1-acyl-2-(5Z,8Z,11Z,14Z-eicosatetraenoyl)-sn-glycero-3-phospho-(1D-myo-inositol) + CoA. It carries out the reaction (5Z,8Z,11Z,14Z)-eicosatetraenoyl-CoA + 1-hexadecanoyl-sn-glycero-3-phosphocholine = 1-hexadecanoyl-2-(5Z,8Z,11Z,14Z-eicosatetraenoyl)-sn-glycero-3-phosphocholine + CoA. The catalysed reaction is 1-octadecanoyl-sn-glycero-3-phospho-(1D-myo-inositol) + (5Z,8Z,11Z,14Z)-eicosatetraenoyl-CoA = 1-octadecanoyl-2-(5Z,8Z,11Z,14Z-eicosatetraenoyl)-sn-glycero-3-phospho-(1D-myo-inositol) + CoA. It functions in the pathway lipid metabolism; phospholipid metabolism. Functionally, acyltransferase which catalyzes the transfer of an acyl group from an acyl-CoA to a lysophosphatidylinositol (1-acylglycerophosphatidylinositol or LPI) leading to the production of a phosphatidylinositol (1,2-diacyl-sn-glycero-3-phosphoinositol or PI) and participates in the reacylation step of the phospholipid remodeling pathway also known as the Lands cycle. Prefers arachidonoyl-CoA as the acyl donor, thus contributing to the regulation of free levels arachidonic acid in cell. In liver, participates in the regulation of triglyceride metabolism through the phosphatidylinositol acyl-chain remodeling regulation. This is Membrane-bound acylglycerophosphatidylinositol O-acyltransferase MBOAT7 (MBOAT7) from Bos taurus (Bovine).